We begin with the raw amino-acid sequence, 672 residues long: Threonine--tRNA ligase (672 aa).

The TGS domain maps to 2 to 60 (SEPKNILLTVDGELREVTHGTTGLDLFREKPTTAVMRVDGLLWDLAREIPAGASVESVD). Residues 260–567 (DHRKLGAELD…LTEHYAGAFP (308 aa)) form a catalytic region. Residues Cys-366, His-417, and His-544 each coordinate Zn(2+).

The protein belongs to the class-II aminoacyl-tRNA synthetase family. As to quaternary structure, homodimer. Requires Zn(2+) as cofactor.

The protein localises to the cytoplasm. The catalysed reaction is tRNA(Thr) + L-threonine + ATP = L-threonyl-tRNA(Thr) + AMP + diphosphate + H(+). In terms of biological role, catalyzes the attachment of threonine to tRNA(Thr) in a two-step reaction: L-threonine is first activated by ATP to form Thr-AMP and then transferred to the acceptor end of tRNA(Thr). Also edits incorrectly charged L-seryl-tRNA(Thr). The polypeptide is Threonine--tRNA ligase (Micrococcus luteus (strain ATCC 4698 / DSM 20030 / JCM 1464 / CCM 169 / CCUG 5858 / IAM 1056 / NBRC 3333 / NCIMB 9278 / NCTC 2665 / VKM Ac-2230) (Micrococcus lysodeikticus)).